A 160-amino-acid chain; its full sequence is Transcription elongation factor GreB (160 aa).

The protein belongs to the GreA/GreB family. GreB subfamily.

In terms of biological role, necessary for efficient RNA polymerase transcription elongation past template-encoded arresting sites. The arresting sites in DNA have the property of trapping a certain fraction of elongating RNA polymerases that pass through, resulting in locked ternary complexes. Cleavage of the nascent transcript by cleavage factors such as GreA or GreB allows the resumption of elongation from the new 3'terminus. GreB releases sequences of up to 9 nucleotides in length. This is Transcription elongation factor GreB from Vibrio vulnificus (strain YJ016).